The chain runs to 31 residues: Superoxide dismutase [Cu-Zn] (31 aa).

It belongs to the Cu-Zn superoxide dismutase family. Cu cation serves as cofactor. Requires Zn(2+) as cofactor.

It localises to the cytoplasm. The enzyme catalyses 2 superoxide + 2 H(+) = H2O2 + O2. In terms of biological role, destroys radicals which are normally produced within the cells and which are toxic to biological systems. The chain is Superoxide dismutase [Cu-Zn] from Striga hermonthica (Purple witchweed).